A 405-amino-acid polypeptide reads, in one-letter code: Pentatricopeptide repeat-containing protein At1g11630, mitochondrial (405 aa).

The N-terminal 72 residues, 1–72 (MAFLFRIRTS…RSTSLSPDYH (72 aa)), are a transit peptide targeting the mitochondrion. 9 PPR repeats span residues 74–108 (DRIIFSVAVVTLAREKHFVAVSQLLDGFIQNQPDP), 110–144 (SESFAVRAIILYGRANMLDRSIQTFRNLEQYEIPR), 145–180 (TVKSLNALLFACLMAKDYKEANRVYLEMPKMYGIEP), 181–215 (DLETYNRMIRVLCESGSTSSSYSIVAEMERKWIKP), 216–250 (TAASFGLMIDGFYKEEKFDEVRKVMRMMDEFGVHV), 251–285 (GVATYNIMIQCLCKRKKSAEAKALIDGVMSCRMRP), 286–320 (NSVTYSLLIHGFCSEENLDEAMNLFEVMVCNGYKP), 321–355 (DSECYFTLIHCLCKGGDFETALILCRESMEKNWVP), and 356–386 (SFSVMKWLVNGLASRSKVDEAKELIAVVKEK).

This sequence belongs to the PPR family. P subfamily.

It is found in the mitochondrion. The polypeptide is Pentatricopeptide repeat-containing protein At1g11630, mitochondrial (Arabidopsis thaliana (Mouse-ear cress)).